We begin with the raw amino-acid sequence, 940 residues long: UvrABC system protein A (940 aa).

Residue 31-38 coordinates ATP; sequence GLSGSGKS. Residues 253–280 form a C4-type zinc finger; that stretch reads CPICGYSMRELEPRLFSFNNPAGACPTC. ABC transporter domains lie at 310 to 587 and 607 to 937; these read WDRR…PESL and ANPE…RFLK. 640–647 contributes to the ATP binding site; that stretch reads GVSGSGKS. Residues 740 to 766 form a C4-type zinc finger; that stretch reads CEACQGDGVIKVEMHFLPDIYVPCDQC.

It belongs to the ABC transporter superfamily. UvrA family. Forms a heterotetramer with UvrB during the search for lesions. Interacts with TRCF (Mfd). UvrB and TRCF binding to UvrA could be mutually exclusive.

It localises to the cytoplasm. In terms of biological role, the UvrABC repair system catalyzes the recognition and processing of DNA lesions. UvrA is an ATPase and a DNA-binding protein. A damage recognition complex composed of 2 UvrA and 2 UvrB subunits scans DNA for abnormalities. When the presence of a lesion has been verified by UvrB, the UvrA molecules dissociate. In Escherichia coli (strain K12), this protein is UvrABC system protein A.